The following is a 968-amino-acid chain: MPFSLGQRWISDTESELGLGTVVAVEGRMVTVMFPATDENRMFSRADAPLTRVIFNPGDKAESHEGWSLTVSEVEEKDNLIIYHGIHDETGEQVSLRETLLNHNIRFNKPQDRLFAGQIDRLERFGIRYQCQQLRHKLATSDMLGLQGPRVGLIPHQQWIAHEVGRRFAPRVLLADEVGLGKTIEAGLIIHQQLLTGRAERILVIVPDTLRHQWLVEMLRRFNLKFSVFDEDRCVEAYADSDNPFYTEQLVICSLELLRKKRRLDQALAADWDLMVVDEAHHLEWTEDAPSRAYRIVEALSEEIPGVLLLTATPDQLGHQSHFARLRLLDPDRFYDYEAFLKEETNYADIASTADALAGNEPLSQEIIDNLKTQLAEKDITAATDIIQATDADVDQQQAARDALLQDLLDRHGTGRVLYRNSRASVKGFPTRIFNQYPQKMPAQYVTAARVGAMMNGHLDTAGKVKQALSPEKIYQEFESSSASWWKFDPRVDWLIDFLKENRREKVLIIASQAETALSLEEALRTREGIQATVFHEGMSIIERDKAGAYFAQETGGAQALICSEIGSEGRNFQFASQLILFDLPLNPDLLEQRIGRLDRIGQNNDVSIHVPYLEDTAQESLMQWYHKGLNAFEQTCPSGHILFNEFSESLLNVLISQDKEVLEQVLSDTQTRYAELKSVMEQGRDKLLEINSHGGERANKLVNALAERDEDTNLIGSVIRLWDIIGVEQEDSGENAIVLRPSEHMMFPTYPGLPEDGITVTFDREMALSRDDIALITQEHPLVQTGLDLITSSETGTTSVAVLKNKSLPAGTIFLELIYMADASAPKSSQLYRYLPPTPVRVLLDKNGNNLADNVNYESFNKQLSAVNRHIASKLVNASQAVLHPLFAKGEEFASSELTLLTESSRAKMTTQLNGELERLEALKAVNPNIRDEELAHLREQMVELNGYLDGAVLQLDAIRLVLVSHA.

One can recognise a Helicase ATP-binding domain in the interval 163–332 (EVGRRFAPRV…FARLRLLDPD (170 aa)). 176–183 (DEVGLGKT) contacts ATP. A DEAH box motif is present at residues 278–281 (DEAH). The Helicase C-terminal domain occupies 491-645 (RVDWLIDFLK…TCPSGHILFN (155 aa)).

The protein belongs to the SNF2/RAD54 helicase family. RapA subfamily. Interacts with the RNAP. Has a higher affinity for the core RNAP than for the holoenzyme. Its ATPase activity is stimulated by binding to RNAP.

Functionally, transcription regulator that activates transcription by stimulating RNA polymerase (RNAP) recycling in case of stress conditions such as supercoiled DNA or high salt concentrations. Probably acts by releasing the RNAP, when it is trapped or immobilized on tightly supercoiled DNA. Does not activate transcription on linear DNA. Probably not involved in DNA repair. The protein is RNA polymerase-associated protein RapA of Shewanella woodyi (strain ATCC 51908 / MS32).